A 266-amino-acid chain; its full sequence is ATP synthase subunit a (266 aa).

6 helical membrane passes run 38–58 (KQMLLVILSVVIIATFFILAA), 99–119 (LLFSLFFFILVNNIYGAIPVI), 126–146 (HVGGAYVMAGIVYFTWIIIGI), 162–182 (GVPWYILPIVVPIEIISNFLV), 191–211 (LFATMLAGHLIVMLAGSGIEF), and 224–244 (SVLVLVGAVAMYMLEALIMAL).

This sequence belongs to the ATPase A chain family. In terms of assembly, F-type ATPases have 2 components, CF(1) - the catalytic core - and CF(0) - the membrane proton channel. CF(1) has five subunits: alpha(3), beta(3), gamma(1), delta(1), epsilon(1). CF(0) has three main subunits: a(1), b(2) and c(9-12). The alpha and beta chains form an alternating ring which encloses part of the gamma chain. CF(1) is attached to CF(0) by a central stalk formed by the gamma and epsilon chains, while a peripheral stalk is formed by the delta and b chains.

Its subcellular location is the cell membrane. Key component of the proton channel; it plays a direct role in the translocation of protons across the membrane. The sequence is that of ATP synthase subunit a from Paenarthrobacter aurescens (strain TC1).